The sequence spans 251 residues: Cobalt transport protein CbiM (251 aa).

Positions 1–27 (MNKKKNTILIGLYFLVGIMLFPDRIYA) are cleaved as a signal peptide. Helical transmembrane passes span 35 to 55 (LPVK…ALGI), 66 to 86 (GPGI…LSSL), 103 to 123 (LGAI…VLIF), 131 to 151 (GGLT…PFVA), 166 to 186 (WLSV…TTAT), and 208 to 228 (VFAT…VLIF).

This sequence belongs to the CbiM family. As to quaternary structure, forms an energy-coupling factor (ECF) transporter complex composed of an ATP-binding protein (A component, CbiO), a transmembrane protein (T component, CbiQ) and 2 possible substrate-capture proteins (S components, CbiM and CbiN) of unknown stoichimetry.

It is found in the cell membrane. Its pathway is cofactor biosynthesis; adenosylcobalamin biosynthesis. Functionally, part of the energy-coupling factor (ECF) transporter complex CbiMNOQ involved in cobalt import. The protein is Cobalt transport protein CbiM of Acetohalobium arabaticum (strain ATCC 49924 / DSM 5501 / Z-7288).